The chain runs to 509 residues: Solute carrier family 2, facilitated glucose transporter member 4 (509 aa).

Over 1–24 (MPSGFQQIGSEDGEPPRQRVTGTL) the chain is Cytoplasmic. An interaction with SRFBP1 region spans residues 7–13 (QIGSEDG). Serine 10 carries the post-translational modification Phosphoserine. A helical membrane pass occupies residues 25 to 45 (VLAVFSAVLGSLQFGYNIGVI). Topologically, residues 46-81 (NAPQKVIEQSYNETWLGRQGPEGPGSIPPGTLTTLW) are extracellular. N-linked (GlcNAc...) asparagine glycosylation is present at asparagine 57. Residues 82–102 (ALSVAIFSVGGMISSFLIGII) traverse the membrane as a helical segment. The Cytoplasmic segment spans residues 103 to 111 (SQWLGRKRA). The helical transmembrane segment at 112-132 (MLFNNALAVLGGTLMGLAKAA) threads the bilayer. Residues 133–142 (ASYEMLILGR) are Extracellular-facing. A helical transmembrane segment spans residues 143 to 163 (FFIGAYSGLTSGLVPMYVGEI). Topologically, residues 164–171 (APTHLRGA) are cytoplasmic. Residues 172–192 (LGTLNQLAIVTGILIAQVLGL) traverse the membrane as a helical segment. Glutamine 177 contacts D-glucose. Residues 193 to 200 (ESMLGTAT) lie on the Extracellular side of the membrane. Residues 201–221 (LWPLLLGITVLPALLQMVLLP) form a helical membrane-spanning segment. Residues 222 to 287 (LCPESPRYLY…LLGSHTHRQP (66 aa)) are Cytoplasmic-facing. A lipid anchor (S-palmitoyl cysteine) is attached at cysteine 223. Serine 274 is modified (phosphoserine; by SGK1). A helical membrane pass occupies residues 288–308 (LVIAIVLQLSQQLSGINAVFY). D-glucose-binding positions include 298–299 (QQ) and asparagine 304. The Extracellular portion of the chain corresponds to 309 to 323 (YSTSIFESAGVEKPA). Residues 324-344 (YATIGAGVVNTVFTLVSVFLV) form a helical membrane-spanning segment. Asparagine 333 is a D-glucose binding site. Residues 345-353 (ERAGRRTLH) are Cytoplasmic-facing. The helical transmembrane segment at 354-374 (LLGLAGMCGCAILMTVALLLL) threads the bilayer. The Extracellular portion of the chain corresponds to 375–384 (ERVPAMSYVS). Residues 385 to 405 (IVAIFGFVAFFEIGPGPIPWF) form a helical membrane-spanning segment. D-glucose contacts are provided by glutamate 396 and tryptophan 404. The Cytoplasmic portion of the chain corresponds to 406 to 417 (IVAELFSQGPRP). A helical transmembrane segment spans residues 418-438 (AAMAVAGFSNWTCNFIIGMGF). Over 439-445 (QYVADAM) the chain is Extracellular. Residues 446-466 (GPYVFLLFAVLLLGFFIFTFL) form a helical membrane-spanning segment. Topologically, residues 467–509 (KVPETRGRTFDQISAVFHRTPSLLEQEVKPSTELEYLGPDEHD) are cytoplasmic. Residue threonine 486 is modified to Phosphothreonine. Serine 488 is modified (phosphoserine). The short motif at 489 to 490 (LL) is the Dileucine internalization motif element.

It belongs to the major facilitator superfamily. Sugar transporter (TC 2.A.1.1) family. Glucose transporter subfamily. As to quaternary structure, binds to DAXX. Interacts via its N-terminus with SRFBP1. Interacts with NDUFA9. Interacts with TRARG1; the interaction is required for proper SLC2A4 recycling after insulin stimulation. In terms of processing, sumoylated. Palmitoylated. Palmitoylation by ZDHHC7 controls the insulin-dependent translocation of GLUT4 to the plasma membrane.

It is found in the cell membrane. Its subcellular location is the endomembrane system. The protein localises to the cytoplasm. It localises to the perinuclear region. The enzyme catalyses D-glucose(out) = D-glucose(in). Functionally, insulin-regulated facilitative glucose transporter, which plays a key role in removal of glucose from circulation. Response to insulin is regulated by its intracellular localization: in the absence of insulin, it is efficiently retained intracellularly within storage compartments in muscle and fat cells. Upon insulin stimulation, translocates from these compartments to the cell surface where it transports glucose from the extracellular milieu into the cell. The chain is Solute carrier family 2, facilitated glucose transporter member 4 from Bos taurus (Bovine).